Here is a 259-residue protein sequence, read N- to C-terminus: GEM-like protein 1 (259 aa).

Positions 1–11 are enriched in basic and acidic residues; it reads MSGQENHDHGR. Positions 1–79 are disordered; it reads MSGQENHDHG…PSPAPRNTMD (79 aa). The span at 13-30 shows a compositional bias: low complexity; it reads SSTPAAASEPSKAAAHSS. The region spanning 138–215 is the GRAM domain; the sequence is KVFKQTFDCL…NQLKAVNPST (78 aa).

It belongs to the GEM family. Interacts with AFH1.

This chain is GEM-like protein 1 (FIP1), found in Arabidopsis thaliana (Mouse-ear cress).